We begin with the raw amino-acid sequence, 238 residues long: Ribonuclease PH (238 aa).

The segment at 67–87 (PRSTHTRSDREAARGKQSGRT) is disordered. Phosphate is bound by residues arginine 86 and 124-126 (GTR).

It belongs to the RNase PH family. In terms of assembly, homohexameric ring arranged as a trimer of dimers.

It catalyses the reaction tRNA(n+1) + phosphate = tRNA(n) + a ribonucleoside 5'-diphosphate. Phosphorolytic 3'-5' exoribonuclease that plays an important role in tRNA 3'-end maturation. Removes nucleotide residues following the 3'-CCA terminus of tRNAs; can also add nucleotides to the ends of RNA molecules by using nucleoside diphosphates as substrates, but this may not be physiologically important. Probably plays a role in initiation of 16S rRNA degradation (leading to ribosome degradation) during starvation. The polypeptide is Ribonuclease PH (Ralstonia nicotianae (strain ATCC BAA-1114 / GMI1000) (Ralstonia solanacearum)).